The chain runs to 336 residues: Dihydroorotate dehydrogenase (quinone) (336 aa).

FMN is bound by residues 62–66 (AGLDK) and threonine 86. Position 66 (lysine 66) interacts with substrate. 111 to 115 (NRMGF) contacts substrate. Positions 139 and 172 each coordinate FMN. Residue asparagine 172 participates in substrate binding. Serine 175 serves as the catalytic Nucleophile. Asparagine 177 lines the substrate pocket. Residues lysine 217 and threonine 245 each coordinate FMN. Substrate is bound at residue 246–247 (NT). Residues glycine 268, glycine 297, and 318–319 (YT) contribute to the FMN site.

The protein belongs to the dihydroorotate dehydrogenase family. Type 2 subfamily. As to quaternary structure, monomer. FMN serves as cofactor.

The protein resides in the cell membrane. The catalysed reaction is (S)-dihydroorotate + a quinone = orotate + a quinol. It participates in pyrimidine metabolism; UMP biosynthesis via de novo pathway; orotate from (S)-dihydroorotate (quinone route): step 1/1. Its function is as follows. Catalyzes the conversion of dihydroorotate to orotate with quinone as electron acceptor. In Pseudoalteromonas translucida (strain TAC 125), this protein is Dihydroorotate dehydrogenase (quinone).